A 354-amino-acid polypeptide reads, in one-letter code: Holliday junction branch migration complex subunit RuvB (354 aa).

Residues 1–10 (MAIKRNQGSN) are compositionally biased toward polar residues. Positions 1–36 (MAIKRNQGSNPKPEKKERLTKAETHQEQDNLEESIR) are disordered. Over residues 12–36 (KPEKKERLTKAETHQEQDNLEESIR) the composition is skewed to basic and acidic residues. The segment at 13–196 (PEKKERLTKA…FGLIQRLKFY (184 aa)) is large ATPase domain (RuvB-L). Residues isoleucine 35, arginine 36, glycine 77, lysine 80, threonine 81, threonine 82, 143 to 145 (EDY), arginine 186, tyrosine 196, and arginine 233 contribute to the ATP site. Residue threonine 81 participates in Mg(2+) binding. Residues 197-267 (EPEELALIIK…LAAEALDIYQ (71 aa)) form a small ATPAse domain (RuvB-S) region. The interval 270–354 (PQGLDWTDRL…EEQLSIFSEQ (85 aa)) is head domain (RuvB-H). Positions 325 and 330 each coordinate DNA.

The protein belongs to the RuvB family. Homohexamer. Forms an RuvA(8)-RuvB(12)-Holliday junction (HJ) complex. HJ DNA is sandwiched between 2 RuvA tetramers; dsDNA enters through RuvA and exits via RuvB. An RuvB hexamer assembles on each DNA strand where it exits the tetramer. Each RuvB hexamer is contacted by two RuvA subunits (via domain III) on 2 adjacent RuvB subunits; this complex drives branch migration. In the full resolvosome a probable DNA-RuvA(4)-RuvB(12)-RuvC(2) complex forms which resolves the HJ.

The protein localises to the cytoplasm. The enzyme catalyses ATP + H2O = ADP + phosphate + H(+). Its function is as follows. The RuvA-RuvB-RuvC complex processes Holliday junction (HJ) DNA during genetic recombination and DNA repair, while the RuvA-RuvB complex plays an important role in the rescue of blocked DNA replication forks via replication fork reversal (RFR). RuvA specifically binds to HJ cruciform DNA, conferring on it an open structure. The RuvB hexamer acts as an ATP-dependent pump, pulling dsDNA into and through the RuvAB complex. RuvB forms 2 homohexamers on either side of HJ DNA bound by 1 or 2 RuvA tetramers; 4 subunits per hexamer contact DNA at a time. Coordinated motions by a converter formed by DNA-disengaged RuvB subunits stimulates ATP hydrolysis and nucleotide exchange. Immobilization of the converter enables RuvB to convert the ATP-contained energy into a lever motion, pulling 2 nucleotides of DNA out of the RuvA tetramer per ATP hydrolyzed, thus driving DNA branch migration. The RuvB motors rotate together with the DNA substrate, which together with the progressing nucleotide cycle form the mechanistic basis for DNA recombination by continuous HJ branch migration. Branch migration allows RuvC to scan DNA until it finds its consensus sequence, where it cleaves and resolves cruciform DNA. This chain is Holliday junction branch migration complex subunit RuvB, found in Crocosphaera subtropica (strain ATCC 51142 / BH68) (Cyanothece sp. (strain ATCC 51142)).